Reading from the N-terminus, the 777-residue chain is Endonuclease MutS2 (777 aa).

328–335 contacts ATP; that stretch reads GPNTGGKT. The Smr domain maps to 702-777; it reads LDLRGKRYEE…GSGATIVIFK (76 aa).

This sequence belongs to the DNA mismatch repair MutS family. MutS2 subfamily. As to quaternary structure, homodimer. Binds to stalled ribosomes, contacting rRNA.

Functionally, endonuclease that is involved in the suppression of homologous recombination and thus may have a key role in the control of bacterial genetic diversity. Acts as a ribosome collision sensor, splitting the ribosome into its 2 subunits. Detects stalled/collided 70S ribosomes which it binds and splits by an ATP-hydrolysis driven conformational change. Acts upstream of the ribosome quality control system (RQC), a ribosome-associated complex that mediates the extraction of incompletely synthesized nascent chains from stalled ribosomes and their subsequent degradation. Probably generates substrates for RQC. This Streptococcus gordonii (strain Challis / ATCC 35105 / BCRC 15272 / CH1 / DL1 / V288) protein is Endonuclease MutS2.